The sequence spans 125 residues: Ribosome-binding factor A (125 aa).

This sequence belongs to the RbfA family. In terms of assembly, monomer. Binds 30S ribosomal subunits, but not 50S ribosomal subunits or 70S ribosomes.

It is found in the cytoplasm. Its function is as follows. One of several proteins that assist in the late maturation steps of the functional core of the 30S ribosomal subunit. Associates with free 30S ribosomal subunits (but not with 30S subunits that are part of 70S ribosomes or polysomes). Required for efficient processing of 16S rRNA. May interact with the 5'-terminal helix region of 16S rRNA. In Desulfitobacterium hafniense (strain DSM 10664 / DCB-2), this protein is Ribosome-binding factor A.